Consider the following 142-residue polypeptide: Large ribosomal subunit protein uL13 (142 aa).

This sequence belongs to the universal ribosomal protein uL13 family. In terms of assembly, part of the 50S ribosomal subunit.

Functionally, this protein is one of the early assembly proteins of the 50S ribosomal subunit, although it is not seen to bind rRNA by itself. It is important during the early stages of 50S assembly. The polypeptide is Large ribosomal subunit protein uL13 (Sodalis glossinidius (strain morsitans)).